A 143-amino-acid chain; its full sequence is Putative pre-16S rRNA nuclease (143 aa).

It belongs to the YqgF nuclease family.

It is found in the cytoplasm. Functionally, could be a nuclease involved in processing of the 5'-end of pre-16S rRNA. The protein is Putative pre-16S rRNA nuclease (ybeB) of Lactococcus lactis subsp. lactis (strain IL1403) (Streptococcus lactis).